The following is a 229-amino-acid chain: Potassium/proton antiporter CemA (229 aa).

Transmembrane regions (helical) follow at residues 6–26, 107–127, and 189–209; these read AFIP…ISLC, ILHF…SFWG, and ILSG…KYWI.

It belongs to the CemA family.

It is found in the plastid. Its subcellular location is the chloroplast inner membrane. It catalyses the reaction K(+)(in) + H(+)(out) = K(+)(out) + H(+)(in). Contributes to K(+)/H(+) antiport activity by supporting proton efflux to control proton extrusion and homeostasis in chloroplasts in a light-dependent manner to modulate photosynthesis. Prevents excessive induction of non-photochemical quenching (NPQ) under continuous-light conditions. Indirectly promotes efficient inorganic carbon uptake into chloroplasts. In Draba nemorosa (Woodland whitlowgrass), this protein is Potassium/proton antiporter CemA.